The following is a 309-amino-acid chain: Porphobilinogen deaminase (309 aa).

S-(dipyrrolylmethanemethyl)cysteine is present on Cys-242.

Belongs to the HMBS family. In terms of assembly, monomer. Requires dipyrromethane as cofactor.

It catalyses the reaction 4 porphobilinogen + H2O = hydroxymethylbilane + 4 NH4(+). The protein operates within porphyrin-containing compound metabolism; protoporphyrin-IX biosynthesis; coproporphyrinogen-III from 5-aminolevulinate: step 2/4. Its function is as follows. Tetrapolymerization of the monopyrrole PBG into the hydroxymethylbilane pre-uroporphyrinogen in several discrete steps. The polypeptide is Porphobilinogen deaminase (Pseudoalteromonas atlantica (strain T6c / ATCC BAA-1087)).